Reading from the N-terminus, the 687-residue chain is Homoaconitase, mitochondrial (687 aa).

A mitochondrion-targeting transit peptide spans Met-1–Tyr-18. 3 residues coordinate [4Fe-4S] cluster: Cys-340, Cys-400, and Cys-403. The span at Glu-481–Glu-490 shows a compositional bias: acidic residues. Residues Glu-481–Leu-500 form a disordered region.

The protein belongs to the aconitase/IPM isomerase family. It depends on [4Fe-4S] cluster as a cofactor.

The protein localises to the mitochondrion. The catalysed reaction is (2R,3S)-homoisocitrate = cis-homoaconitate + H2O. Its pathway is amino-acid biosynthesis; L-lysine biosynthesis via AAA pathway; L-alpha-aminoadipate from 2-oxoglutarate: step 3/5. Its function is as follows. Catalyzes the reversible hydration of cis-homoaconitate to (2R,3S)-homoisocitrate, a step in the alpha-aminoadipate pathway for lysine biosynthesis. The protein is Homoaconitase, mitochondrial (LYS4) of Yarrowia lipolytica (strain CLIB 122 / E 150) (Yeast).